Here is a 149-residue protein sequence, read N- to C-terminus: Cytochrome c-type biogenesis protein CcmE (149 aa).

Residues 1–7 are Cytoplasmic-facing; the sequence is MTRKQKR. Residues 8-28 traverse the membrane as a helical; Signal-anchor for type II membrane protein segment; sequence LAVIAGGVGFIMVAVLLVLFA. The Periplasmic portion of the chain corresponds to 29–149; sequence FGQSIAYFYM…GVWKGEGEAK (121 aa). 2 residues coordinate heme: His123 and Tyr127.

This sequence belongs to the CcmE/CycJ family.

It localises to the cell inner membrane. In terms of biological role, heme chaperone required for the biogenesis of c-type cytochromes. Transiently binds heme delivered by CcmC and transfers the heme to apo-cytochromes in a process facilitated by CcmF and CcmH. The protein is Cytochrome c-type biogenesis protein CcmE of Allorhizobium ampelinum (strain ATCC BAA-846 / DSM 112012 / S4) (Agrobacterium vitis (strain S4)).